Here is a 159-residue protein sequence, read N- to C-terminus: Large ribosomal subunit protein uL11 (159 aa).

The protein belongs to the universal ribosomal protein uL11 family. In terms of assembly, part of the ribosomal stalk of the 50S ribosomal subunit. Interacts with L10 and the large rRNA to form the base of the stalk. L10 forms an elongated spine to which L12 dimers bind in a sequential fashion forming a multimeric L10(L12)X complex.

Forms part of the ribosomal stalk which helps the ribosome interact with GTP-bound translation factors. This chain is Large ribosomal subunit protein uL11, found in Nitrosopumilus maritimus (strain SCM1).